Reading from the N-terminus, the 688-residue chain is Protein sel-1 homolog 2 (688 aa).

The first 18 residues, 1 to 18, serve as a signal peptide directing secretion; it reads MNPLALLVEILIIIEVTT. The Extracellular portion of the chain corresponds to 19 to 662; sequence KNTEAERYNR…KWKWLKLDST (644 aa). A glycan (N-linked (GlcNAc...) asparagine) is linked at N34. 11 Sel1-like repeats span residues 107 to 142, 143 to 178, 179 to 214, 215 to 250, 297 to 333, 334 to 370, 371 to 406, 407 to 442, 443 to 478, 551 to 586, and 588 to 623; these read GDELFKMGNKILQESKSQKQKTEAYTLFTRAANMGN, LKAMEKMADAWLFGSFGMQNITAAIQLYESLAKEGS, YKAQNALGFLSSYGIGMEYDQAKALIYYTFGSAGGS, MMSQMILGYRYLSGINVLQNCEVALNHYKKVADYIA, VQIQVSLGQLHLIGRKGLDQDYSKALYYFLKAAKAGS, ANAMAFIGKMYFEGNAAAPQNNATAFKYFSMAASKGN, AIGLHGLGLLYFHGKGVPVNYGEALKYFQKAAEKGW, PNAQFQLGFMYYSGSGVWKDYKLAFKYFYLASQSGQ, PLAIYYLAEMYATGTGVLRSCRTAVELYKGVCELGH, AFARVKIGDYHYYGYGTKKDYETAATHYSIAADKHH, and AQAMFNLAYMYEHGLGIAKDIHLARRLYDMAAQTSP. N162 is a glycosylation site (N-linked (GlcNAc...) asparagine). A helical transmembrane segment spans residues 663-683; the sequence is VGPYWDLLVIGLIVAMLIFLL. Over 684–688 the chain is Cytoplasmic; that stretch reads RNRHR.

This sequence belongs to the sel-1 family.

It is found in the membrane. The protein resides in the cell projection. The protein localises to the cilium. Its subcellular location is the nucleus speckle. The chain is Protein sel-1 homolog 2 (Sel1l2) from Mus musculus (Mouse).